We begin with the raw amino-acid sequence, 448 residues long: N-succinylarginine dihydrolase (448 aa).

Substrate-binding positions include 19-28 (GGLSYGNVAS), asparagine 110, and 137-138 (HR). The active site involves glutamate 174. Position 214 (arginine 214) interacts with substrate. Residue histidine 250 is part of the active site. Substrate contacts are provided by aspartate 252 and asparagine 365. The active-site Nucleophile is the cysteine 371.

This sequence belongs to the succinylarginine dihydrolase family. As to quaternary structure, homodimer.

The catalysed reaction is N(2)-succinyl-L-arginine + 2 H2O + 2 H(+) = N(2)-succinyl-L-ornithine + 2 NH4(+) + CO2. The protein operates within amino-acid degradation; L-arginine degradation via AST pathway; L-glutamate and succinate from L-arginine: step 2/5. Its function is as follows. Catalyzes the hydrolysis of N(2)-succinylarginine into N(2)-succinylornithine, ammonia and CO(2). In Pseudomonas savastanoi pv. phaseolicola (strain 1448A / Race 6) (Pseudomonas syringae pv. phaseolicola (strain 1448A / Race 6)), this protein is N-succinylarginine dihydrolase.